The chain runs to 111 residues: Nucleoid-associated protein LBA0378 (111 aa).

Belongs to the YbaB/EbfC family. As to quaternary structure, homodimer.

It localises to the cytoplasm. The protein localises to the nucleoid. Its function is as follows. Binds to DNA and alters its conformation. May be involved in regulation of gene expression, nucleoid organization and DNA protection. This Lactobacillus acidophilus (strain ATCC 700396 / NCK56 / N2 / NCFM) protein is Nucleoid-associated protein LBA0378.